Reading from the N-terminus, the 466-residue chain is 3-isopropylmalate dehydratase large subunit (466 aa).

Residues Cys345, Cys405, and Cys408 each contribute to the [4Fe-4S] cluster site.

This sequence belongs to the aconitase/IPM isomerase family. LeuC type 1 subfamily. Heterodimer of LeuC and LeuD. [4Fe-4S] cluster is required as a cofactor.

It catalyses the reaction (2R,3S)-3-isopropylmalate = (2S)-2-isopropylmalate. The protein operates within amino-acid biosynthesis; L-leucine biosynthesis; L-leucine from 3-methyl-2-oxobutanoate: step 2/4. In terms of biological role, catalyzes the isomerization between 2-isopropylmalate and 3-isopropylmalate, via the formation of 2-isopropylmaleate. The sequence is that of 3-isopropylmalate dehydratase large subunit from Microcystis aeruginosa (strain NIES-843 / IAM M-2473).